A 157-amino-acid chain; its full sequence is Small ribosomal subunit protein bS6 (157 aa).

A compositionally biased stretch (basic and acidic residues) spans 96 to 151; it reads HEEGPSAMMRKADRDRDRDERGGGGFRGDREGGFRGDREGGGFRGDRGPRRPRDDA. The tract at residues 96-157 is disordered; the sequence is HEEGPSAMMR…RDDAPAATEE (62 aa).

It belongs to the bacterial ribosomal protein bS6 family.

In terms of biological role, binds together with bS18 to 16S ribosomal RNA. This is Small ribosomal subunit protein bS6 from Rhodopseudomonas palustris (strain BisA53).